The following is a 249-amino-acid chain: Probable transcriptional regulatory protein Meso_3192 (249 aa).

Belongs to the TACO1 family.

Its subcellular location is the cytoplasm. This is Probable transcriptional regulatory protein Meso_3192 from Chelativorans sp. (strain BNC1).